A 294-amino-acid polypeptide reads, in one-letter code: Small ribosomal subunit protein uS3 (294 aa).

In terms of domain architecture, KH type-2 spans 39 to 107; it reads VREYLKTKLK…PVAVNIEEVR (69 aa). A disordered region spans residues 210–294; sequence RNDLPAVETP…AAPAADVKGE (85 aa). Residues 219–238 are compositionally biased toward basic and acidic residues; that stretch reads PRPDEERRPRGPRRDGRPGG. Low complexity-rich tracts occupy residues 249 to 258 and 281 to 294; these read RPAAGNSAPA and VAAP…VKGE.

The protein belongs to the universal ribosomal protein uS3 family. Part of the 30S ribosomal subunit. Forms a tight complex with proteins S10 and S14.

Functionally, binds the lower part of the 30S subunit head. Binds mRNA in the 70S ribosome, positioning it for translation. In Verminephrobacter eiseniae (strain EF01-2), this protein is Small ribosomal subunit protein uS3.